The primary structure comprises 118 residues: Secreted effector CSEP0064 (118 aa).

A signal peptide spans 1 to 21; it reads MRPFQLLSALAIFINLEAVEA. Cysteine 27 and cysteine 113 are disulfide-bonded.

Interacts in planta with the pathogenesis-related protein PR10.

The protein localises to the secreted. It localises to the host cell. Its function is as follows. Secreted effector that increases susceptibility to infection in both monocotyledonous and dicotyledonous plants. Non-catalytic homolog of fungal RNases that binds host RNA and inhibits the degradation of host ribosomal RNA induced by ribosome-inactivating proteins (RIPs), preventing host cell death, an inviable interaction and demise of the fungus. The sequence is that of Secreted effector CSEP0064 from Blumeria graminis f. sp. hordei (strain DH14) (Barley powdery mildew).